Reading from the N-terminus, the 145-residue chain is D-aminoacyl-tRNA deacylase (145 aa).

Residues 137-138 carry the Gly-cisPro motif, important for rejection of L-amino acids motif; it reads GP.

This sequence belongs to the DTD family. In terms of assembly, homodimer.

It localises to the cytoplasm. It catalyses the reaction glycyl-tRNA(Ala) + H2O = tRNA(Ala) + glycine + H(+). The enzyme catalyses a D-aminoacyl-tRNA + H2O = a tRNA + a D-alpha-amino acid + H(+). Its function is as follows. An aminoacyl-tRNA editing enzyme that deacylates mischarged D-aminoacyl-tRNAs. Also deacylates mischarged glycyl-tRNA(Ala), protecting cells against glycine mischarging by AlaRS. Acts via tRNA-based rather than protein-based catalysis; rejects L-amino acids rather than detecting D-amino acids in the active site. By recycling D-aminoacyl-tRNA to D-amino acids and free tRNA molecules, this enzyme counteracts the toxicity associated with the formation of D-aminoacyl-tRNA entities in vivo and helps enforce protein L-homochirality. The chain is D-aminoacyl-tRNA deacylase from Erwinia tasmaniensis (strain DSM 17950 / CFBP 7177 / CIP 109463 / NCPPB 4357 / Et1/99).